Reading from the N-terminus, the 137-residue chain is Glutamyl-tRNA(Gln) amidotransferase subunit C, chloroplastic/mitochondrial (137 aa).

This sequence belongs to the GatC family. Subunit of the heterotrimeric GatCAB amidotransferase (AdT) complex, composed of A, B and C subunits.

Its subcellular location is the mitochondrion. It localises to the plastid. The protein resides in the chloroplast. It carries out the reaction L-glutamyl-tRNA(Gln) + L-glutamine + ATP + H2O = L-glutaminyl-tRNA(Gln) + L-glutamate + ADP + phosphate + H(+). Its function is as follows. Allows the formation of correctly charged Gln-tRNA(Gln) through the transamidation of misacylated Glu-tRNA(Gln) in chloroplasts and mitochondria. The reaction takes place in the presence of glutamine and ATP through an activated gamma-phospho-Glu-tRNA(Gln). This is Glutamyl-tRNA(Gln) amidotransferase subunit C, chloroplastic/mitochondrial from Vitis vinifera (Grape).